The sequence spans 90 residues: Trp-8 progonadoliberin (90 aa).

An N-terminal signal peptide occupies residues 1–24 (MSRHVTVVLLLAVVLLLSSHMSHG). Gln25 carries the post-translational modification Pyrrolidone carboxylic acid. Gly34 carries the post-translational modification Glycine amide.

Belongs to the GnRH family. Expressed in forebrain but not in testis, ovary, kidney and liver.

Its subcellular location is the secreted. In terms of biological role, stimulates the secretion of gonadotropins. This Rana dybowskii (Dybovsky's frog) protein is Trp-8 progonadoliberin.